Reading from the N-terminus, the 97-residue chain is Large ribosomal subunit protein bL27 (97 aa).

The segment covering 1 to 10 (MVKLNLSNLQ) has biased composition (polar residues). The propeptide occupies 1–12 (MVKLNLSNLQHF). The segment at 1–38 (MVKLNLSNLQHFAHKKGGGSTSNGRDSQAKRLGAKAAD) is disordered.

This sequence belongs to the bacterial ribosomal protein bL27 family. In terms of processing, the N-terminus is cleaved by ribosomal processing cysteine protease Prp.

In Streptococcus equi subsp. zooepidemicus (strain H70), this protein is Large ribosomal subunit protein bL27.